The following is a 258-amino-acid chain: Granzyme K (258 aa).

Positions 1–23 (MSFSSSALVFLVAGIYMSSESFH) are cleaved as a signal peptide. Residues 24 to 25 (TE) constitute a propeptide, activation peptide. A Peptidase S1 domain is found at 26-253 (IIGGREVQPH…YQTWIKSKLA (228 aa)). Residues Cys-51 and Cys-67 are joined by a disulfide bond. Residues His-66 and Asp-110 each act as charge relay system in the active site. 3 cysteine pairs are disulfide-bonded: Cys-143/Cys-214, Cys-175/Cys-193, and Cys-204/Cys-228. Ser-208 acts as the Charge relay system in catalysis.

It belongs to the peptidase S1 family. Granzyme subfamily. As to expression, speen, lungs and liver non-parenchymal cells.

The protein localises to the cytoplasmic granule. The sequence is that of Granzyme K (Gzmk) from Rattus norvegicus (Rat).